The following is a 580-amino-acid chain: Putative ankyrin repeat protein L63 (580 aa).

ANK repeat units follow at residues 81 to 110 (SLNR…DFRI), 111 to 140 (DNDY…NIGA), 141 to 170 (NDNC…DINA), 172 to 200 (NNYP…DIRA), 202 to 230 (DDYV…VLNK), 314 to 339 (SLDD…LLGA), 340 to 369 (SERK…NIKC), 370 to 399 (GSNC…DINS), 400 to 429 (GNNY…NIRA), 431 to 459 (NDRA…NIRA), 461 to 489 (DDRA…DIKA), 490 to 519 (GDDY…NIKA), 521 to 549 (DDYA…DIRA), and 551 to 579 (NNYA…VINP).

The chain is Putative ankyrin repeat protein L63 from Acanthamoeba polyphaga (Amoeba).